Consider the following 368-residue polypeptide: Reverse transcriptase-like protein (368 aa).

The Reverse transcriptase domain maps to 91–318; it reads TRELTVPYWY…SELNWLGHKV (228 aa).

Its subcellular location is the mitochondrion. This Chlamydomonas reinhardtii (Chlamydomonas smithii) protein is Reverse transcriptase-like protein (RTL).